Reading from the N-terminus, the 145-residue chain is Hemoglobin subunit beta (145 aa).

A Globin domain is found at 1–145; the sequence is MLTSEEKAAV…VANALAHRYH (145 aa). Thr-11 is subject to Phosphothreonine. Lys-58 bears the N6-acetyllysine mark. A heme b-binding site is contributed by His-62. The residue at position 81 (Lys-81) is an N6-acetyllysine. His-91 serves as a coordination point for heme b. Cys-92 is subject to S-nitrosocysteine.

It belongs to the globin family. In terms of assembly, heterotetramer of two alpha chains and two beta chains. Red blood cells.

In terms of biological role, involved in oxygen transport from the lung to the various peripheral tissues. In Rangifer tarandus (Reindeer), this protein is Hemoglobin subunit beta (HBB).